A 400-amino-acid chain; its full sequence is Argininosuccinate synthase (400 aa).

An ATP-binding site is contributed by 8–16 (AYSGGLDTS). L-citrulline is bound by residues tyrosine 86 and serine 91. Glycine 116 is an ATP binding site. L-aspartate-binding residues include threonine 118, asparagine 122, and aspartate 123. Asparagine 122 provides a ligand contact to L-citrulline. Residues arginine 126, serine 175, serine 184, glutamate 260, and tyrosine 272 each contribute to the L-citrulline site.

Belongs to the argininosuccinate synthase family. Type 1 subfamily. Homotetramer.

It is found in the cytoplasm. It catalyses the reaction L-citrulline + L-aspartate + ATP = 2-(N(omega)-L-arginino)succinate + AMP + diphosphate + H(+). It functions in the pathway amino-acid biosynthesis; L-arginine biosynthesis; L-arginine from L-ornithine and carbamoyl phosphate: step 2/3. The protein is Argininosuccinate synthase of Clostridium acetobutylicum (strain ATCC 824 / DSM 792 / JCM 1419 / IAM 19013 / LMG 5710 / NBRC 13948 / NRRL B-527 / VKM B-1787 / 2291 / W).